The following is a 1399-amino-acid chain: MKDLLNLLKNQGQIEEFDAIRIGLASPEMIRSWSFGEVKKPETINYRTFKPERDGLFCAKIFGPVKDYECLCGKYKRLKHRGVICEKCGVEVALAKVRRERMAHIELASPVAHIWFLKSLPSRIGLLMDMTLRDIERVLYFESYVVIDPGMTTLEKGQLLNDEQYFEALEEFGDDFDARMGAEAVRELLHAIDLDHEIGRLREEIPQTNSETKIKKLSKRLKLMEAFKDSGNLPEWMVLTVLPVLPPDLRPLVPLDGGRFATSDLNDLYRRVINRNNRLKRLLDLSAPDIIVRNEKRMLQEAVDALLDNGRRGRAITGSNKRPLKSLADMIKGKQGRFRQNLLGKRVDYSGRSVITVGPTLRLHQCGLPKKMALELFKPFIFGKLEMRGLATTIKAAKKMVERELPEVWDVLAEVIREHPVLLNRAPTLHRLGIQAFEPVLIEGKAIQLHPLVCAAYNADFDGDQMAVHVPLTLEAQLEARALMMSTNNILSPANGEPIIVPSQDVVLGLYYMTREAVNAKGEGRVFADLQEVDRVFRAGEASLHARVKVRINETVKEKDGSITKNTRIVDTTVGRALLFQIVPAGLSYDVVNQPMKKKAISKLINQCYRTVGLKDTVIFADQLMYTGFAYSTISGVSIGVNDFVIPEEKARIIDAATEEVKEIESQYASGLVTQGEKYNKVIDLWSKANDEVSKAMMANLSKEPVVDREGKTVEQESFNSMYMMADSGARGSAAQIRQLAGMRGLMAKPDGSIIETPITANFREGLSVLQYFISTHGARKGLADTALKTANSGYLTRRLVDVAQDLVVTEIDCGTEQGLLMTPHIEGGDVVEPLGERVLGRVIAKDVFKPGTEDVIVPAGTLIDEKWVEFIELNSVDEVVVRSPITCETRYGICAKCYGRDLARGHQVNIGEAVGVIAAQSIGEPGTQLTMRTFHIGGAASRTSAADSVQVKNGGAIRLHNLKHVERVDGNLVAVSRSGELAVADEFGRERERYKLPYGAVISVKEGDKVDAGAIVAKWDPHTHPIVTEMKGIVTFVGMEEGITIKRQTDELTGLTNIEVLDPKDRPAAGKDIRPAIKMVDANGKELLLPGTDVPAQYFLPANALVGVADGAQIAVGDVIARIPQETSKTRDITGGLPRVADLFEARRPKEASILAEISGTISFGKETKGKRRLVITPTDGSDPYEELIPKWRHLNVFEGEQVNRGEVISDGPSDPHDILRLLGVSALAKYIVNEIQDVYRLQGVKINDKHIETILRQMLRKVEVTESGDSSFIKGDQMELTQVLGENERLAEEDKFVAKYTRVLLGITKASLSTESFISAASFQETTRVLTEAAVTGKRDYLRGLKENVVVGRLIPAGTGLAYHSERKRKRDADKPVRVSASEVEAALTEALNSSGN.

Residues Cys-70, Cys-72, Cys-85, and Cys-88 each coordinate Zn(2+). Residues Asp-460, Asp-462, and Asp-464 each contribute to the Mg(2+) site. Zn(2+) is bound by residues Cys-814, Cys-888, Cys-895, and Cys-898.

It belongs to the RNA polymerase beta' chain family. The RNAP catalytic core consists of 2 alpha, 1 beta, 1 beta' and 1 omega subunit. When a sigma factor is associated with the core the holoenzyme is formed, which can initiate transcription. Requires Mg(2+) as cofactor. It depends on Zn(2+) as a cofactor.

It carries out the reaction RNA(n) + a ribonucleoside 5'-triphosphate = RNA(n+1) + diphosphate. DNA-dependent RNA polymerase catalyzes the transcription of DNA into RNA using the four ribonucleoside triphosphates as substrates. This Ectopseudomonas mendocina (strain ymp) (Pseudomonas mendocina) protein is DNA-directed RNA polymerase subunit beta'.